The primary structure comprises 204 residues: Thiamine-phosphate synthase (204 aa).

4-amino-2-methyl-5-(diphosphooxymethyl)pyrimidine is bound by residues 35–39 (QVREK) and asparagine 67. Aspartate 68 and aspartate 87 together coordinate Mg(2+). Residue serine 106 participates in 4-amino-2-methyl-5-(diphosphooxymethyl)pyrimidine binding. 2-[(2R,5Z)-2-carboxy-4-methylthiazol-5(2H)-ylidene]ethyl phosphate is bound at residue 132 to 134 (TPT). Lysine 135 is a 4-amino-2-methyl-5-(diphosphooxymethyl)pyrimidine binding site. Residues glycine 163 and 183-184 (VS) contribute to the 2-[(2R,5Z)-2-carboxy-4-methylthiazol-5(2H)-ylidene]ethyl phosphate site.

It belongs to the thiamine-phosphate synthase family. The cofactor is Mg(2+).

It carries out the reaction 2-[(2R,5Z)-2-carboxy-4-methylthiazol-5(2H)-ylidene]ethyl phosphate + 4-amino-2-methyl-5-(diphosphooxymethyl)pyrimidine + 2 H(+) = thiamine phosphate + CO2 + diphosphate. The enzyme catalyses 2-(2-carboxy-4-methylthiazol-5-yl)ethyl phosphate + 4-amino-2-methyl-5-(diphosphooxymethyl)pyrimidine + 2 H(+) = thiamine phosphate + CO2 + diphosphate. The catalysed reaction is 4-methyl-5-(2-phosphooxyethyl)-thiazole + 4-amino-2-methyl-5-(diphosphooxymethyl)pyrimidine + H(+) = thiamine phosphate + diphosphate. It participates in cofactor biosynthesis; thiamine diphosphate biosynthesis; thiamine phosphate from 4-amino-2-methyl-5-diphosphomethylpyrimidine and 4-methyl-5-(2-phosphoethyl)-thiazole: step 1/1. Functionally, condenses 4-methyl-5-(beta-hydroxyethyl)thiazole monophosphate (THZ-P) and 2-methyl-4-amino-5-hydroxymethyl pyrimidine pyrophosphate (HMP-PP) to form thiamine monophosphate (TMP). The sequence is that of Thiamine-phosphate synthase from Vibrio campbellii (strain ATCC BAA-1116).